A 358-amino-acid chain; its full sequence is Chorismate synthase (358 aa).

Residue R47 coordinates NADP(+). Residues 124–126 (RSS), 240–241 (NA), G284, 299–303 (KPVAT), and R325 each bind FMN.

This sequence belongs to the chorismate synthase family. Homotetramer. Requires FMNH2 as cofactor.

The catalysed reaction is 5-O-(1-carboxyvinyl)-3-phosphoshikimate = chorismate + phosphate. The protein operates within metabolic intermediate biosynthesis; chorismate biosynthesis; chorismate from D-erythrose 4-phosphate and phosphoenolpyruvate: step 7/7. In terms of biological role, catalyzes the anti-1,4-elimination of the C-3 phosphate and the C-6 proR hydrogen from 5-enolpyruvylshikimate-3-phosphate (EPSP) to yield chorismate, which is the branch point compound that serves as the starting substrate for the three terminal pathways of aromatic amino acid biosynthesis. This reaction introduces a second double bond into the aromatic ring system. This Bacteroides fragilis (strain YCH46) protein is Chorismate synthase.